The sequence spans 107 residues: U1-lycotoxin-Ls1m (107 aa).

Residues Met1–Ser20 form the signal peptide. A propeptide spanning residues Glu21 to Arg41 is cleaved from the precursor. Cystine bridges form between Cys44–Cys59, Cys51–Cys68, Cys58–Cys86, and Cys70–Cys84.

It belongs to the neurotoxin 19 (CSTX) family. 04 (U1-Lctx) subfamily. As to expression, expressed by the venom gland.

Its subcellular location is the secreted. This is U1-lycotoxin-Ls1m from Lycosa singoriensis (Wolf spider).